We begin with the raw amino-acid sequence, 401 residues long: Beta-lactamase (401 aa).

A signal peptide spans 1 to 39 (MKLFTSTLTAKKSSTHKPLISLALSVLISTLLISETAQA). Catalysis depends on serine 102, which acts as the Acyl-ester intermediate. Tyrosine 188 functions as the Proton acceptor in the catalytic mechanism. 353–355 (KTG) contributes to the substrate binding site.

This sequence belongs to the class-C beta-lactamase family.

The protein localises to the secreted. It carries out the reaction a beta-lactam + H2O = a substituted beta-amino acid. In terms of biological role, this protein is a serine beta-lactamase with a substrate specificity for cephalosporins. The protein is Beta-lactamase (ampC) of Psychrobacter immobilis.